The following is a 240-amino-acid chain: MKVKKGGGGAGTATESAPGPSGQSVAPIPQPPAESESGSESEPDAGPGPRPGPLQRKQPIGPEDVLGLQRITGDYLCSPEENIYKIDFVRFKIRDMDSGTVLFEIKKPPVSERLPINRRDLDPNAGRFVRYQFTPAFLRLRQVGATVEFTVGDKPVNNFRMIERHYFRNQLLKSFDFHFGFCIPSSKNTCEHIYDFPPLSEELISEMIRHPYETQSDSFYFVDDRLVMHNKADYSYSGTP.

Gly residues predominate over residues 1 to 11 (MKVKKGGGGAG). The interval 1-59 (MKVKKGGGGAGTATESAPGPSGQSVAPIPQPPAESESGSESEPDAGPGPRPGPLQRKQP) is required for midbody localization. The disordered stretch occupies residues 1–61 (MKVKKGGGGA…GPLQRKQPIG (61 aa)). Serine 37, serine 39, and serine 41 each carry phosphoserine; by CK2. The segment at 121 to 240 (LDPNAGRFVR…KADYSYSGTP (120 aa)) is required for centrosome localization. Tyrosine 131 is a binding site for tetradecanoate.

It belongs to the PDE6D/unc-119 family. Interacts with CABP4; in the absence of calcium. Interacts with DNM1; leading to a decrease of DNM1 GTPase activity. May interact with GTP-bound ARL1. Interacts with ARL2 and ARL3 (GTP-bound forms); this promotes the release of myyristoylated cargo proteins. Found in a complex with ARL3, RP2 and UNC119; RP2 induces hydrolysis of GTP ARL3 in the complex, leading to the release of UNC119. Interacts with NPHP3 (when myristoylated). Interacts with CYS1 (when myristoylated). Interacts with MACIR; interaction only takes place when UNC119 is not liganded with myristoylated proteins. Interacts with LCK; this interaction plays a crucial role in activation of LCK. Interacts with FYN. Interacts with RAB11A; in a cell cycle-dependent manner. Interacts with LYN (via SH2 and SH3 domains); leading to LYN activation. Found in a complex with ABL1, ABL2, CRK and UNC119; leading to the inhibition of CRK phosphorylation by ABL kinases. Interacts with CD44; leading to Shigella invasion. Interacts with KLHL18 (via kelch repeats). Interacts with PPP3CA, PPP3CB and PPP3CC. Interacts with USP48; this interaction promotes UNC119 stability. In terms of processing, phosphorylation suppresses its interaction with KLHL18 and down-regulates its KLHL18-mediated degradation. Phosphorylated more under light conditions than dark conditions. Dephosphorylated by calcineurin. Abundantly expressed in retina, in photoreceptor synapses and inner segments. Expressed in a much lesser extent in several other tissues.

The protein localises to the cytoplasm. It localises to the cytoskeleton. It is found in the microtubule organizing center. Its subcellular location is the centrosome. The protein resides in the spindle pole. The protein localises to the spindle. In terms of biological role, involved in synaptic functions in photoreceptor cells, the signal transduction in immune cells as a Src family kinase activator, endosome recycling, the uptake of bacteria and endocytosis, protein trafficking in sensory neurons and as lipid-binding chaperone with specificity for a diverse subset of myristoylated proteins. Specifically binds the myristoyl moiety of a subset of N-terminally myristoylated proteins and is required for their localization. Binds myristoylated GNAT1 and is required for G-protein localization and trafficking in sensory neurons. Probably plays a role in trafficking proteins in photoreceptor cells. Plays important roles in mediating Src family kinase signals for the completion of cytokinesis via RAB11A. The sequence is that of Protein unc-119 homolog A (UNC119) from Homo sapiens (Human).